The following is a 126-amino-acid chain: Small ribosomal subunit protein uS12 (126 aa).

A disordered region spans residues 1–28 (MPTINQLVRKGRQSETTKSKSPALQDCP). 3-methylthioaspartic acid is present on aspartate 89. The tract at residues 103–126 (DTQGVKDRKQARSKYGAKRAKAAK) is disordered. Basic residues predominate over residues 113 to 126 (ARSKYGAKRAKAAK).

Belongs to the universal ribosomal protein uS12 family. Part of the 30S ribosomal subunit. Contacts proteins S8 and S17. May interact with IF1 in the 30S initiation complex.

Its function is as follows. With S4 and S5 plays an important role in translational accuracy. In terms of biological role, interacts with and stabilizes bases of the 16S rRNA that are involved in tRNA selection in the A site and with the mRNA backbone. Located at the interface of the 30S and 50S subunits, it traverses the body of the 30S subunit contacting proteins on the other side and probably holding the rRNA structure together. The combined cluster of proteins S8, S12 and S17 appears to hold together the shoulder and platform of the 30S subunit. The protein is Small ribosomal subunit protein uS12 of Burkholderia orbicola (strain MC0-3).